Here is a 119-residue protein sequence, read N- to C-terminus: MNIDQYLPVLLFILVGMGVGVVPLVLGYVLGPNRPDAAKNSPYECGFEAFEDARMKFDVRYYLVAILFILFDLEIAFLLPWAVALRDVGGAGFAAVLIFLTVLVVGFVYEWKKGALDWD.

Helical transmembrane passes span 9–29 (VLLF…LGYV), 63–83 (LVAI…PWAV), and 88–108 (VGGA…VGFV).

This sequence belongs to the complex I subunit 3 family. In terms of assembly, NDH-1 is composed of 14 different subunits. Subunits NuoA, H, J, K, L, M, N constitute the membrane sector of the complex.

It is found in the cell inner membrane. The enzyme catalyses a quinone + NADH + 5 H(+)(in) = a quinol + NAD(+) + 4 H(+)(out). Its function is as follows. NDH-1 shuttles electrons from NADH, via FMN and iron-sulfur (Fe-S) centers, to quinones in the respiratory chain. The immediate electron acceptor for the enzyme in this species is believed to be ubiquinone. Couples the redox reaction to proton translocation (for every two electrons transferred, four hydrogen ions are translocated across the cytoplasmic membrane), and thus conserves the redox energy in a proton gradient. This Delftia acidovorans (strain DSM 14801 / SPH-1) protein is NADH-quinone oxidoreductase subunit A.